Consider the following 337-residue polypeptide: Cytidine deaminase 2 (337 aa).

2 consecutive CMP/dCMP-type deaminase domains span residues T43 to L164 and L199 to L320. N84–D86 is a binding site for substrate. Position 97 (H97) interacts with Zn(2+). Residue E99 is the Proton donor of the active site. Zn(2+) contacts are provided by C132 and C135.

The protein belongs to the cytidine and deoxycytidylate deaminase family. As to quaternary structure, homodimer. Requires Zn(2+) as cofactor.

It carries out the reaction cytidine + H2O + H(+) = uridine + NH4(+). It catalyses the reaction 2'-deoxycytidine + H2O + H(+) = 2'-deoxyuridine + NH4(+). Its function is as follows. This enzyme scavenges exogenous and endogenous cytidine and 2'-deoxycytidine for UMP synthesis. The protein is Cytidine deaminase 2 (CDA2) of Arabidopsis thaliana (Mouse-ear cress).